The primary structure comprises 196 residues: Dimiconin (196 aa).

An N-terminal signal peptide occupies residues 1–21 (MKTIIVVTIFGILTCAYPTDG). N-linked (GlcNAc...) asparagine glycosylation is found at N62 and N187.

The protein belongs to the calycin superfamily. Triabin family. Salivary gland.

The protein resides in the secreted. Functionally, inhibits the intrinsic blood coagulation pathway by blocking the activation of host coagulation factor XII (F12) but not the enzymatic activity of activated F12. The sequence is that of Dimiconin from Triatoma dimidiata (Kissing bug).